A 641-amino-acid chain; its full sequence is WW domain-binding protein 11 (641 aa).

Polar residues predominate over residues 1-11 (MGRRSTSSTKS). The segment at 1–37 (MGRRSTSSTKSGKFMNPTDQARKEARKRELKKNKKQR) is disordered. The interval 1-45 (MGRRSTSSTKSGKFMNPTDQARKEARKRELKKNKKQRMMVRAAVL) is required for nuclear import. Position 13 is an N6-acetyllysine (K13). Residues 28–37 (RELKKNKKQR) show a composition bias toward basic residues. Positions 75–133 (EKVLKDKRKKLRETFERILRLYEKENPDIYKELRKLEVEYEQKRAQLSQYFDAVKNAQH) form a coiled coil. Phosphoserine is present on S181. Residues 188-213 (HGVPRLPPGRKPPGPPPGPPPPQVLQ) are disordered. At R192 the chain carries Omega-N-methylarginine. The segment covering 192-210 (RLPPGRKPPGPPPGPPPPQ) has biased composition (pro residues). Positions 217 to 221 (RKVGF) are interaction with PP1. Residue Y236 is modified to Phosphotyrosine. The disordered stretch occupies residues 236–550 (YSPELAQRGH…IQRPKADDAS (315 aa)). Residue S237 is modified to Phosphoserine. Over residues 253–263 (SEDDGYPEDMD) the composition is skewed to acidic residues. Positions 276–304 (TDRSDAESDGDEFGHREDSERDNTEEKKS) are enriched in basic and acidic residues. 2 positions are modified to phosphoserine: S279 and S283. An interaction with PP1 region spans residues 306 to 310 (LSVRF). A compositionally biased stretch (acidic residues) spans 351 to 365 (EFSEEEDADDSDDSE). A phosphoserine mark is found at S353, S361, and S364. Residues 366–380 (AEKQSQKQHKDDGHS) show a composition bias toward basic and acidic residues. Over residues 381-404 (DSTAAASSQQQAPPQSAPASQIQA) the composition is skewed to low complexity. Composition is skewed to pro residues over residues 405-447 (PPMP…PPGM), 456-504 (RLLP…PPRP), and 510-530 (PLVPPLGPAPPGLFPPAPLPN). The PGR signature appears at 455 to 466 (PRLLPPGPPPGR). K557 is covalently cross-linked (Glycyl lysine isopeptide (Lys-Gly) (interchain with G-Cter in SUMO2)). K565 carries the post-translational modification N6-acetyllysine. K572 is covalently cross-linked (Glycyl lysine isopeptide (Lys-Gly) (interchain with G-Cter in SUMO2)). Residues 588-620 (ENKGATAVPQRRSEDDSAVPVAKAAPRSGPSVA) are disordered. S600 carries the post-translational modification Phosphoserine. The tract at residues 633–641 (FMKEMEGLL) is required for nuclear export.

Interacts via the PGR motif with PQBP1 in the nucleus. Interacts with the WW domains of WBP4. Interacts with PPP1CA, PPP1CB and PPP1CC. As to expression, ubiquitously expressed, with highest levels in testis.

The protein localises to the nucleus. It is found in the cytoplasm. In terms of biological role, activates pre-mRNA splicing. May inhibit PP1 phosphatase activity. The chain is WW domain-binding protein 11 (Wbp11) from Mus musculus (Mouse).